The primary structure comprises 213 residues: Inactive ribonuclease-like protein 10 (213 aa).

Residues 1-24 (MKLTLVQFFFMMLLLLLGLGVGLG) form the signal peptide. N-linked (GlcNAc...) asparagine glycosylation is present at asparagine 128.

Belongs to the pancreatic ribonuclease family. Post-translationally, the N-terminus is blocked. Glycosylated. In terms of tissue distribution, male-specific expression in proximal caput of the epididymis.

The protein localises to the secreted. In terms of biological role, secreted proximal epididymal protein required for post-testicular sperm maturation and male fertility. May be involved in sperm adhesion to the egg zona pellucida. Does not have ribonuclease activity. The chain is Inactive ribonuclease-like protein 10 (RNASE10) from Sus scrofa (Pig).